The primary structure comprises 371 residues: Bifunctional enzyme IspD/IspF (371 aa).

Residues 1-210 (MSEISLIMLA…LDLPTPSFEI (210 aa)) form a 2-C-methyl-D-erythritol 4-phosphate cytidylyltransferase region. The segment at 211–371 (FTGNGFDVHE…NLKYFDWTRL (161 aa)) is 2-C-methyl-D-erythritol 2,4-cyclodiphosphate synthase. A divalent metal cation contacts are provided by aspartate 217 and histidine 219. 4-CDP-2-C-methyl-D-erythritol 2-phosphate-binding positions include 217–219 (DVH) and 243–244 (HS). Histidine 251 provides a ligand contact to a divalent metal cation. 4-CDP-2-C-methyl-D-erythritol 2-phosphate-binding positions include 265–267 (DIG), 270–274 (YPDTD), 341–344 (TTTE), phenylalanine 348, and arginine 351.

In the N-terminal section; belongs to the IspD/TarI cytidylyltransferase family. IspD subfamily. It in the C-terminal section; belongs to the IspF family. A divalent metal cation serves as cofactor.

It carries out the reaction 2-C-methyl-D-erythritol 4-phosphate + CTP + H(+) = 4-CDP-2-C-methyl-D-erythritol + diphosphate. It catalyses the reaction 4-CDP-2-C-methyl-D-erythritol 2-phosphate = 2-C-methyl-D-erythritol 2,4-cyclic diphosphate + CMP. The protein operates within isoprenoid biosynthesis; isopentenyl diphosphate biosynthesis via DXP pathway; isopentenyl diphosphate from 1-deoxy-D-xylulose 5-phosphate: step 2/6. It participates in isoprenoid biosynthesis; isopentenyl diphosphate biosynthesis via DXP pathway; isopentenyl diphosphate from 1-deoxy-D-xylulose 5-phosphate: step 4/6. Its function is as follows. Bifunctional enzyme that catalyzes the formation of 4-diphosphocytidyl-2-C-methyl-D-erythritol from CTP and 2-C-methyl-D-erythritol 4-phosphate (MEP) (IspD), and catalyzes the conversion of 4-diphosphocytidyl-2-C-methyl-D-erythritol 2-phosphate (CDP-ME2P) to 2-C-methyl-D-erythritol 2,4-cyclodiphosphate (ME-CPP) with a corresponding release of cytidine 5-monophosphate (CMP) (IspF). This is Bifunctional enzyme IspD/IspF from Campylobacter jejuni subsp. jejuni serotype O:23/36 (strain 81-176).